The chain runs to 448 residues: Exodeoxyribonuclease 7 large subunit (448 aa).

Belongs to the XseA family. As to quaternary structure, heterooligomer composed of large and small subunits.

The protein resides in the cytoplasm. The catalysed reaction is Exonucleolytic cleavage in either 5'- to 3'- or 3'- to 5'-direction to yield nucleoside 5'-phosphates.. Bidirectionally degrades single-stranded DNA into large acid-insoluble oligonucleotides, which are then degraded further into small acid-soluble oligonucleotides. This Geobacillus kaustophilus (strain HTA426) protein is Exodeoxyribonuclease 7 large subunit.